A 510-amino-acid chain; its full sequence is NAD(P)H-quinone oxidoreductase subunit 2, chloroplastic (510 aa).

Helical transmembrane passes span 24-44 (LLLF…GLIL), 59-79 (WFYF…LFRW), 99-119 (IFQF…VEYI), 124-144 (MAIT…MFLC), 149-169 (LITI…LSGY), 183-203 (YLLM…WLYG), 229-249 (ISIA…PAPF), 295-315 (WHLL…LIAI), 323-343 (MLAY…IVGD), 354-374 (YMLF…SFGL), 395-415 (ALSL…AGFF), 418-438 (LYLF…MGLL), and 484-504 (MTVC…ILAI).

Belongs to the complex I subunit 2 family. In terms of assembly, NDH is composed of at least 16 different subunits, 5 of which are encoded in the nucleus.

The protein localises to the plastid. It is found in the chloroplast thylakoid membrane. It catalyses the reaction a plastoquinone + NADH + (n+1) H(+)(in) = a plastoquinol + NAD(+) + n H(+)(out). The enzyme catalyses a plastoquinone + NADPH + (n+1) H(+)(in) = a plastoquinol + NADP(+) + n H(+)(out). Its function is as follows. NDH shuttles electrons from NAD(P)H:plastoquinone, via FMN and iron-sulfur (Fe-S) centers, to quinones in the photosynthetic chain and possibly in a chloroplast respiratory chain. The immediate electron acceptor for the enzyme in this species is believed to be plastoquinone. Couples the redox reaction to proton translocation, and thus conserves the redox energy in a proton gradient. This is NAD(P)H-quinone oxidoreductase subunit 2, chloroplastic from Sisyrinchium montanum (Strict blue-eyed grass).